The sequence spans 212 residues: Peptide methionine sulfoxide reductase MsrA (212 aa).

Residue Cys52 is part of the active site.

This sequence belongs to the MsrA Met sulfoxide reductase family.

The catalysed reaction is L-methionyl-[protein] + [thioredoxin]-disulfide + H2O = L-methionyl-(S)-S-oxide-[protein] + [thioredoxin]-dithiol. The enzyme catalyses [thioredoxin]-disulfide + L-methionine + H2O = L-methionine (S)-S-oxide + [thioredoxin]-dithiol. Functionally, has an important function as a repair enzyme for proteins that have been inactivated by oxidation. Catalyzes the reversible oxidation-reduction of methionine sulfoxide in proteins to methionine. The sequence is that of Peptide methionine sulfoxide reductase MsrA from Salmonella schwarzengrund (strain CVM19633).